The chain runs to 890 residues: Inter-alpha-trypsin inhibitor heavy chain H3 (890 aa).

Residues 1 to 20 form the signal peptide; it reads MAFAWWPCLILALLSSLAAS. A propeptide spanning residues 21–34 is cleaved from the precursor; the sequence is GFPRSPFRLLGKRS. A VIT domain is found at 29–158; sequence LLGKRSLPEG…KVTFELTYEE (130 aa). Asn-91 is a glycosylation site (N-linked (GlcNAc...) asparagine). The region spanning 284–467 is the VWFA domain; the sequence is NVAFVIDISG…LQLQGFYEEV (184 aa). Asn-580 carries an N-linked (GlcNAc...) asparagine glycan. At Asp-651 the chain carries Aspartate 1-(chondroitin 4-sulfate)-ester. A propeptide spanning residues 652-890 is cleaved from the precursor; it reads PHFIIQIPEK…HTDYIVPNLF (239 aa).

Belongs to the ITIH family. As to quaternary structure, I-alpha-I plasma protease inhibitors are assembled from one or two heavy chains (HC) and one light chain, bikunin. Pre-alpha-inhibitor (P-alpha-I) is composed of ITIH3/HC3 and bikunin. Post-translationally, heavy chains are linked to bikunin via chondroitin 4-sulfate esterified to the alpha-carboxyl of the C-terminal aspartate after propeptide cleavage.

The protein resides in the secreted. Its function is as follows. May act as a carrier of hyaluronan in serum or as a binding protein between hyaluronan and other matrix protein, including those on cell surfaces in tissues to regulate the localization, synthesis and degradation of hyaluronan which are essential to cells undergoing biological processes. This is Inter-alpha-trypsin inhibitor heavy chain H3 (ITIH3) from Homo sapiens (Human).